We begin with the raw amino-acid sequence, 289 residues long: Protease HtpX homolog (289 aa).

Helical transmembrane passes span 5 to 27 (LWVR…GYLI) and 40 to 60 (ALFM…SWYN). His133 provides a ligand contact to Zn(2+). Residue Glu134 is part of the active site. His137 is a Zn(2+) binding site. Helical transmembrane passes span 143-163 (TLIQ…VNFA) and 181-201 (IVAL…IQLA). Residue Glu207 participates in Zn(2+) binding.

It belongs to the peptidase M48B family. Requires Zn(2+) as cofactor.

Its subcellular location is the cell membrane. The sequence is that of Protease HtpX homolog from Pyrococcus furiosus (strain ATCC 43587 / DSM 3638 / JCM 8422 / Vc1).